Reading from the N-terminus, the 245-residue chain is 3-deoxy-manno-octulosonate cytidylyltransferase (245 aa).

It belongs to the KdsB family.

Its subcellular location is the cytoplasm. The catalysed reaction is 3-deoxy-alpha-D-manno-oct-2-ulosonate + CTP = CMP-3-deoxy-beta-D-manno-octulosonate + diphosphate. It functions in the pathway nucleotide-sugar biosynthesis; CMP-3-deoxy-D-manno-octulosonate biosynthesis; CMP-3-deoxy-D-manno-octulosonate from 3-deoxy-D-manno-octulosonate and CTP: step 1/1. Its pathway is bacterial outer membrane biogenesis; lipopolysaccharide biosynthesis. In terms of biological role, activates KDO (a required 8-carbon sugar) for incorporation into bacterial lipopolysaccharide in Gram-negative bacteria. This Rhodopseudomonas palustris (strain BisB5) protein is 3-deoxy-manno-octulosonate cytidylyltransferase.